Reading from the N-terminus, the 225-residue chain is Cytidylate kinase (225 aa).

11–19 (GPAAAGKST) contacts ATP.

Belongs to the cytidylate kinase family. Type 1 subfamily.

It localises to the cytoplasm. The catalysed reaction is CMP + ATP = CDP + ADP. It carries out the reaction dCMP + ATP = dCDP + ADP. The chain is Cytidylate kinase from Bacillus cytotoxicus (strain DSM 22905 / CIP 110041 / 391-98 / NVH 391-98).